Here is a 212-residue protein sequence, read N- to C-terminus: HTH-type transcriptional repressor NicS (212 aa).

In terms of domain architecture, HTH tetR-type spans D14 to F74. A DNA-binding region (H-T-H motif) is located at residues R37 to F56.

Its pathway is cofactor degradation; nicotinate degradation [regulation]. Functionally, transcriptional repressor for the nicAB operon, encoding the upper aerobic nicotinate degradation pathway. Acts under non-induced conditions: repression of the nicAB operon becomes alleviated in presence of either nicotinate or 6-hydroxynicotinate (6HNA). In Pseudomonas putida (strain ATCC 47054 / DSM 6125 / CFBP 8728 / NCIMB 11950 / KT2440), this protein is HTH-type transcriptional repressor NicS (nicS).